Consider the following 907-residue polypeptide: Probable ubiquitin-conjugating enzyme E2 24 (907 aa).

2 disordered regions span residues Met-1–Glu-23 and Ser-485–Ser-509. Residues Gln-495–Ser-509 are compositionally biased toward polar residues. Residues Ser-662–Ile-822 enclose the UBC core domain. The active-site Glycyl thioester intermediate is Cys-748.

It belongs to the ubiquitin-conjugating enzyme family. Interacts with PHO1. Interacts with NLA. In terms of tissue distribution, expressed in the vascular tissues of cotyledons, leaves, roots, sepals, filaments, anthers and junctions between the inflorescence stems and siliques.

It localises to the golgi apparatus membrane. The protein resides in the endoplasmic reticulum membrane. The enzyme catalyses S-ubiquitinyl-[E1 ubiquitin-activating enzyme]-L-cysteine + [E2 ubiquitin-conjugating enzyme]-L-cysteine = [E1 ubiquitin-activating enzyme]-L-cysteine + S-ubiquitinyl-[E2 ubiquitin-conjugating enzyme]-L-cysteine.. The protein operates within protein modification; protein ubiquitination. Functionally, E2 ubiquitin-protein ligase that mediates E1-dependent protein ubiquitination. Mediates PHO1 degradation through multivesicular body-mediated vacuolar proteolysis in response to inorganic phosphate (Pi) availability. Negatively regulates the protein abundance of PHF1 and PHT1s under Pi-sufficient conditions by facilitating the degradation of PHT1 proteins at the endomembrane. Functions cooperatively with NLA to regulate the abundance of the inorganic phosphate (Pi) transporters PHT1-1, PHT1-2 and PHT1-3 in different subcellular compartments. Regulates Pi homeostasis by mediating, cooperatively with NLA, polyubiquitination of PHT1-4 and its targeting for degradation. The sequence is that of Probable ubiquitin-conjugating enzyme E2 24 from Arabidopsis thaliana (Mouse-ear cress).